A 1867-amino-acid chain; its full sequence is Probable serine/threonine-protein kinase roco8 (1867 aa).

The DEP 1 domain occupies 16 to 93 (SSDGLQIKDR…DDYIFYQFDN (78 aa)). 2 disordered regions span residues 96-115 (NNNN…TTAT) and 121-225 (VSTK…NSFN). The span at 121 to 223 (VSTKIGSIGK…NSNSTYNSNS (103 aa)) shows a compositional bias: low complexity. Residues 264–342 (GDKGLKLQKK…NNNNGGGGVM (79 aa)) enclose the DEP 2 domain. LRR repeat units lie at residues 491–512 (RLDD…IINT), 515–536 (FLRI…ESIA), 540–561 (NLES…FSRL), 563–584 (LLTK…VFQL), 586–607 (NLEE…IGSL), 609–631 (SLEK…LGLL), 633–656 (RLKS…STLP), and 657–678 (LLEQ…ITSK). The Roc domain occupies 693–941 (GTETLSHIKL…NEIIQTLLNQ (249 aa)). 2 disordered regions span residues 763–813 (QNGI…KKRP) and 942–961 (SNNN…KQSN). The span at 768–793 (TSSSNLNLSTGTLPPPTQLSSSTSEL) shows a compositional bias: low complexity. In terms of domain architecture, COR spans 974 to 1111 (PSIYITLETN…ILYTLKNNSN (138 aa)). A disordered region spans residues 1163–1207 (SPSLSLSNSSQSVFTNPNNNNNNKSEQQQQQQQQQQQPQPISTSP). A Protein kinase domain is found at 1456 to 1864 (LIYQEEIGVG…TLNEIKDSTI (409 aa)). Residues 1462 to 1470 (IGVGGFSRV) and lysine 1483 contribute to the ATP site. The segment at 1509–1546 (SNSSLSISLSSSTSSLSPPIVNNNNNNNNLNNNLNNLN) is disordered. The active-site Proton acceptor is the aspartate 1721.

The protein belongs to the protein kinase superfamily. TKL Ser/Thr protein kinase family. ROCO subfamily.

It catalyses the reaction L-seryl-[protein] + ATP = O-phospho-L-seryl-[protein] + ADP + H(+). It carries out the reaction L-threonyl-[protein] + ATP = O-phospho-L-threonyl-[protein] + ADP + H(+). This chain is Probable serine/threonine-protein kinase roco8 (roco8), found in Dictyostelium discoideum (Social amoeba).